Consider the following 80-residue polypeptide: Large ribosomal subunit protein uL24 (80 aa).

The interval 53–80 (HMRPTQGQTQGSIIEREFPIHSSNVKKS) is disordered.

This sequence belongs to the universal ribosomal protein uL24 family. As to quaternary structure, part of the 50S ribosomal subunit.

Functionally, one of two assembly initiator proteins, it binds directly to the 5'-end of the 23S rRNA, where it nucleates assembly of the 50S subunit. In terms of biological role, one of the proteins that surrounds the polypeptide exit tunnel on the outside of the subunit. This is Large ribosomal subunit protein uL24 from Pelodictyon phaeoclathratiforme (strain DSM 5477 / BU-1).